Reading from the N-terminus, the 319-residue chain is Melanoma-associated antigen B2 (319 aa).

Residues 1–17 show a composition bias toward basic residues; sequence MPRGQKSKLRAREKRRK. Residues 1 to 112 form a disordered region; that stretch reads MPRGQKSKLR…TKSPSEDPLT (112 aa). Composition is skewed to low complexity over residues 39–57, 67–79, and 94–105; these read PCCSSSVSGGAASSSPAAG, TTAAAAAAGVSST, and ASSSQASTSTKS. Residues Ser77 and Ser105 each carry the phosphoserine modification. In terms of domain architecture, MAGE spans 111-310; the sequence is LTRKSGSLVQ…CAFPTHYEEA (200 aa).

Interacts with TRIM28. In terms of tissue distribution, expressed in testis and placenta, and in a significant fraction of tumors of various histologic types.

May enhance ubiquitin ligase activity of RING-type zinc finger-containing E3 ubiquitin-protein ligases. Proposed to act through recruitment and/or stabilization of the Ubl-conjugating enzyme (E2) at the E3:substrate complex. This is Melanoma-associated antigen B2 (MAGEB2) from Homo sapiens (Human).